The primary structure comprises 197 residues: MKLREVKPEIRVLGIDDGYYGPEDDRALVVGVVMRGGQWIDGVMSTEVTVDGLDVTDRIAEMVNRSKHRPQLRVILTDGITFAGFNVLDIKKLHEETGLPVISVIKRRPDVASVVSALSNLDRTEERRKIVLRAGPVHSVKTRRDEPPVYFQCAGVEPDVARVVLKRTATRHRLPEPIRVAHFIATGVTKGESSSDA.

This sequence belongs to the UPF0215 family.

This Methanopyrus kandleri (strain AV19 / DSM 6324 / JCM 9639 / NBRC 100938) protein is UPF0215 protein MK0057.